Reading from the N-terminus, the 299-residue chain is Epimerase family protein SH2119 (299 aa).

This sequence belongs to the NAD(P)-dependent epimerase/dehydratase family. SDR39U1 subfamily.

The polypeptide is Epimerase family protein SH2119 (Staphylococcus haemolyticus (strain JCSC1435)).